The sequence spans 531 residues: Probable inactive beta-glucosidase 25 (531 aa).

The N-terminal stretch at M1–G24 is a signal peptide. Residues Q53 and N202–E203 contribute to the a beta-D-glucoside site. E203 functions as the Proton donor in the catalytic mechanism. An intrachain disulfide couples C222 to C230. A beta-D-glucoside is bound by residues F348 and E477–W478.

The protein belongs to the glycosyl hydrolase 1 family.

This is Probable inactive beta-glucosidase 25 from Arabidopsis thaliana (Mouse-ear cress).